A 428-amino-acid polypeptide reads, in one-letter code: Methyl-branched lipid omega-hydroxylase (428 aa).

Residue C379 participates in heme binding.

This sequence belongs to the cytochrome P450 family. It depends on heme as a cofactor.

It carries out the reaction a methyl-branched lipid + O2 + 2 reduced ferredoxin [iron-sulfur] cluster + 2 H(+) = an omega-hydroxy-methyl-branched lipid + H2O + 2 oxidized ferredoxin [iron-sulfur] cluster.. It catalyses the reaction cholest-4-en-3-one + 6 reduced [2Fe-2S]-[ferredoxin] + 3 O2 + 5 H(+) = (25R)-3-oxocholest-4-en-26-oate + 6 oxidized [2Fe-2S]-[ferredoxin] + 4 H2O. The protein operates within lipid metabolism; branched-chain fatty acid metabolism. Its function is as follows. Primarily hydroxylates the omega-carbon of a number of methyl-branched lipids, including (2E,6E)-farnesol, phytanate, geranylgeraniol, 15-methylpalmitate and (2E,6E)-farnesyl diphosphate. Also catalyzes the sequential oxidation of the terminal methyl of cholest-4-en-3-one into (25R)-26-hydroxycholest-4-en-3-one (alcohol), (25R)-26-oxocholest-4-en-3-one (aldehyde), to finally yield the carboxylic acid (25R)-3-oxocholest-4-en-26-oate. Also able to sequentially oxidize cholesterol itself, not only cholest-4-en-3-one. In Mycobacterium tuberculosis (strain CDC 1551 / Oshkosh), this protein is Methyl-branched lipid omega-hydroxylase (cyp124).